Here is a 547-residue protein sequence, read N- to C-terminus: Inositol-tetrakisphosphate 1-kinase 6 (547 aa).

Lys263 contributes to the 1D-myo-inositol 1,3,4-trisphosphate binding site. ATP contacts are provided by Arg317 and Lys370. An ATP-grasp domain is found at 327 to 539 (LEGLSAEGRP…FWDAIKQSYE (213 aa)). His381 and Lys415 together coordinate 1D-myo-inositol 1,3,4-trisphosphate. ATP is bound by residues 404 to 415 (QEYIDHGSKIFK), Ser430, and Ser450. Positions 497, 511, and 513 each coordinate Mg(2+). 1D-myo-inositol 1,3,4-trisphosphate is bound by residues Asn513 and Ser517.

This sequence belongs to the ITPK1 family. In terms of assembly, monomer. Mg(2+) serves as cofactor. In terms of tissue distribution, highly expressed in embryos and at lower levels in roots, leaves, flowers and anthers.

The enzyme catalyses 1D-myo-inositol 3,4,5,6-tetrakisphosphate + ATP = 1D-myo-inositol 1,3,4,5,6-pentakisphosphate + ADP + H(+). It carries out the reaction 1D-myo-inositol 1,3,4-trisphosphate + ATP = 1D-myo-inositol 1,3,4,5-tetrakisphosphate + ADP + H(+). It catalyses the reaction 1D-myo-inositol 1,3,4-trisphosphate + ATP = 1D-myo-inositol 1,3,4,6-tetrakisphosphate + ADP + H(+). Kinase that can phosphorylate various inositol polyphosphate such as Ins(3,4,5,6)P4 or Ins(1,3,4)P3 and participates in phytic acid biosynthesis in developing seeds. Phytic acid is the primary storage form of phosphorus in cereal grains and other plant seeds. The chain is Inositol-tetrakisphosphate 1-kinase 6 (ITPK6) from Oryza sativa subsp. japonica (Rice).